The sequence spans 581 residues: Protein ORF B (581 aa).

In Elephas maximus (Indian elephant), this protein is Protein ORF B.